A 1226-amino-acid polypeptide reads, in one-letter code: MSKLKVIPEKSLTNNSRIVGLLAQLEKINAEPSESDTARYVTSKILHLAQSQEKTRREMTAKGSTGMEILLSTLENTKDLQTTLNILSILVELVSAGGGRRVSFLVTKGGSQILLQLLMNASKESPPHEDLMVQIHSILAKIGPKDKKFGVKARINGALNITLNLVKQNLQNHRLVLPCLQLLRVYSANSVNSVSLGKNGVVELMFKIIGPFSKKNSSLIKVALDTLAALLKSKTNARRAVDRGYVQVLLTIYVDWHRHDNRHRNMLIRKGILQSLKSVTNIKLGRKAFIDANGMKILYNTSQECLAVRTLDPLVNTSSLIMRKCFPKNRLPLPTIKSSFHFQLPVIPVTGPVAQLYSLPPEVDDVVDESDDNDDIDVEAENETENEDDLDQNFKNDDIETDINKLKPQQEPGRTIEDLKMYEHLFPELVDDFQDYDLISKEPKPFVFEGKVRGPIVVPTAGEETSGNSGNLRKVVMKENISSKGDEGEKKSTFMDLAKEDIKDNDRTLQQQPGDQNRTISSVHGLNNDIVKALDRITLQNIPSQTAPGFTAEMKKDCSLPLTVLTCAKACPHMATCGNVLFEGRTVQLGKLCCTGVETEDDEDTESNSSVEQASVEVPDGPTLHDPDLYIEIVKNTKSVPEYSEVAYPDYFGHIPPPFKEPILERPYGVQRTKIAQDIERLIHQSDIIDRVVYDLDNPNYTIPEEGDILKFNSKFESGNLRKVIQIRKNEYDLILNSDINSNHYHQWFYFEVSGMRPGVAYRFNIINCEKSNSQFNYGMQPLMYSVQEALNARPWWIRMGTDICYYKNHFSRSSVAAGGQKGKSYYTITFTVNFPHKDDVCYFAYHYPYTYSTLQMHLQKLESAHNPQQIYFRKDVLCETLSGNSCPLVTITAMPESNYYEHICHFRNRPYVFLSARVHPGETNASWVMKGTLEYLMSNNPTAQSLRESYIFKIVPMLNPDGVINGNHRCSLSGEDLNRQWQSPSPDLHPTIYHAKGLLQYLAAVKRLPLVYCDYHGHSRKKNVFMYGCSIKETVWHTNDNATSCDVVEDTGYRTLPKILSHIAPAFCMSSCSFVVEKSKESTARVVVWREIGVQRSYTMESTLCGCDQGKYKGLQIGTRELEEMGAKFCVGLLRLKRLTSPLEYNLPSSLLDFENDLIESSCKVTSPTTYVLDEDEPRFLEEVDYSAESNDELDIELAENVGDYEPSAQEEVLSDSELSRTYLP.

A disordered region spans residues 599–619 (TEDDEDTESNSSVEQASVEVP). The region spanning 848–1138 (YPYTYSTLQM…KFCVGLLRLK (291 aa)) is the Peptidase M14 domain. The Zn(2+) site is built by histidine 920, glutamate 923, and histidine 1017. Glutamate 1102 serves as the catalytic Proton donor/acceptor. A Phosphoserine modification is found at serine 1168. Residues 1206–1226 (YEPSAQEEVLSDSELSRTYLP) form a disordered region.

It belongs to the peptidase M14 family. Interacts with MYLK. It depends on Zn(2+) as a cofactor.

Its subcellular location is the cytoplasm. The protein localises to the cytosol. It is found in the nucleus. The protein resides in the mitochondrion. The catalysed reaction is (L-glutamyl)(n+1)-gamma-L-glutamyl-L-glutamyl-[protein] + H2O = (L-glutamyl)(n)-gamma-L-glutamyl-L-glutamyl-[protein] + L-glutamate. It catalyses the reaction C-terminal L-alpha-aminoacyl-L-glutamyl-L-glutamyl-[tubulin] + H2O = C-terminal L-alpha-aminoacyl-L-glutamyl-[tubulin] + L-glutamate. In terms of biological role, metallocarboxypeptidase that mediates protein deglutamylation of tubulin and non-tubulin target proteins. Catalyzes the removal of polyglutamate side chains present on the gamma-carboxyl group of glutamate residues within the C-terminal tail of alpha- and beta-tubulin. Specifically cleaves tubulin long-side-chains, while it is not able to remove the branching point glutamate. Also catalyzes the removal of polyglutamate residues from the carboxy-terminus of alpha-tubulin as well as non-tubulin proteins such as MYLK. Involved in KLF4 deglutamylation which promotes KLF4 proteasome-mediated degradation, thereby negatively regulating cell pluripotency maintenance and embryogenesis. In Homo sapiens (Human), this protein is Cytosolic carboxypeptidase 1.